The primary structure comprises 282 residues: uncharacterized protein (282 aa).

6 helical membrane passes run 18 to 38, 40 to 60, 87 to 107, 119 to 139, 164 to 184, and 260 to 280; these read PIVL…WAGT, LLVV…VTIG, LWIV…TPVV, ALHF…GAMV, IPVD…PMLI, and VTLA…SLIL.

It belongs to the CbiQ family.

The protein resides in the cell membrane. This is an uncharacterized protein from Mycobacterium tuberculosis (strain CDC 1551 / Oshkosh).